A 172-amino-acid chain; its full sequence is Large ribosomal subunit protein uL10 (172 aa).

Belongs to the universal ribosomal protein uL10 family. In terms of assembly, part of the ribosomal stalk of the 50S ribosomal subunit. The N-terminus interacts with L11 and the large rRNA to form the base of the stalk. The C-terminus forms an elongated spine to which L12 dimers bind in a sequential fashion forming a multimeric L10(L12)X complex.

Functionally, forms part of the ribosomal stalk, playing a central role in the interaction of the ribosome with GTP-bound translation factors. The protein is Large ribosomal subunit protein uL10 of Lawsonia intracellularis (strain PHE/MN1-00).